We begin with the raw amino-acid sequence, 443 residues long: Crinkler effector protein 161 (443 aa).

Positions 1 to 17 are cleaved as a signal peptide; the sequence is MVKLSCVIVGVPGDPFQ. Residues 18–56 form an LQLFLAK domain region; the sequence is VEIDEICELVAGLKDAIKKEKPDSIKCDADKLQLFKAAK. The segment at 57 to 126 is DWL domain; that stretch reads EDRTFSASGA…GMESPSISQI (70 aa). The short motif at 127–133 is the HVLVXXP motif element; the sequence is HVLVVLP. Residues 134–439 are effector domain; sequence EDSESEGGTS…RSMPGYCCAN (306 aa). 2 consecutive short sequence motifs (nuclear localization signal) follow at residues 161–170 and 384–393; these read ADKKRKRYWH and HQPLKRLKLS.

This sequence belongs to the Crinkler effector family.

It is found in the secreted. The protein localises to the host nucleus. Its function is as follows. Secreted effector that exhibits strong cell death suppression activity and suppresses cell death induced by a variety of effectors including CRN63, Avh241 and Avr3a. Protects host plants from biotic and abiotic stresses such as salinity and drought by up-regulation of many defense-related genes, including ABC transporters, Cytochrome P450 monooxygenases and receptor-like kinases (RLKs). Also enhances resistance to Phytophtora pathogens. This chain is Crinkler effector protein 161, found in Phytophthora sojae (strain P6497) (Soybean stem and root rot agent).